The primary structure comprises 1069 residues: Thyrotropin-releasing hormone-degrading ectoenzyme (1069 aa).

Residues 1-11 (MALDGELGEQE) show a composition bias toward acidic residues. A disordered region spans residues 1–46 (MALDGELGEQEEEKKKKKKKKRKKKKEEEEEEEGAEKSSSPFAAAM). The Cytoplasmic portion of the chain corresponds to 1–85 (MALDGELGEQ…ERHIAVHKRL (85 aa)). The segment covering 15 to 25 (KKKKKKKRKKK) has biased composition (basic residues). Residues 86 to 106 (VLAFAVSLVALLAVTMLAVLL) traverse the membrane as a helical; Signal-anchor for type II membrane protein segment. Residues 107 to 1069 (SLRFDECGAS…FQWLGKALRH (963 aa)) lie on the Extracellular side of the membrane. The interval 117–179 (ATPGADGGPS…PSEEEREPWE (63 aa)) is disordered. The span at 121 to 136 (ADGGPSGFPERGGNGS) shows a compositional bias: gly residues. N-linked (GlcNAc...) asparagine glycans are attached at residues Asn-134, Asn-205, Asn-220, Asn-267, and Asn-383. Residue 449-453 (AAMEN) coordinates substrate. Zn(2+) is bound at residue His-485. The Proton acceptor role is filled by Glu-486. 2 residues coordinate Zn(2+): His-489 and Glu-508. N-linked (GlcNAc...) asparagine glycosylation is found at Asn-650, Asn-679, Asn-694, Asn-708, Asn-729, Asn-845, and Asn-951.

Belongs to the peptidase M1 family. As to quaternary structure, homodimer; disulfide-linked. It depends on Zn(2+) as a cofactor. In terms of tissue distribution, predominantly expressed in brain.

It is found in the membrane. It carries out the reaction Release of the N-terminal pyroglutamyl group from pGlu-|-His-Xaa tripeptides and pGlu-|-His-Xaa-Gly tetrapeptides.. Functionally, specific inactivation of TRH after its release. This Homo sapiens (Human) protein is Thyrotropin-releasing hormone-degrading ectoenzyme (TRHDE).